A 448-amino-acid polypeptide reads, in one-letter code: Adenylosuccinate synthetase (448 aa).

GTP contacts are provided by residues 36-42 (GDEGKGK) and 64-66 (GHT). The Proton acceptor role is filled by aspartate 37. Mg(2+)-binding residues include aspartate 37 and glycine 64. IMP is bound by residues 37–40 (DEGK), 62–65 (NAGH), threonine 154, arginine 168, asparagine 246, threonine 261, and arginine 325. Catalysis depends on histidine 65, which acts as the Proton donor. A substrate-binding site is contributed by 321-327 (VTTKRKR). Residues arginine 327, 353 to 355 (KLD), and 436 to 438 (GVG) contribute to the GTP site.

Belongs to the adenylosuccinate synthetase family. Homodimer. The cofactor is Mg(2+).

It is found in the cytoplasm. The catalysed reaction is IMP + L-aspartate + GTP = N(6)-(1,2-dicarboxyethyl)-AMP + GDP + phosphate + 2 H(+). It participates in purine metabolism; AMP biosynthesis via de novo pathway; AMP from IMP: step 1/2. Plays an important role in the de novo pathway and in the salvage pathway of purine nucleotide biosynthesis. Catalyzes the first committed step in the biosynthesis of AMP from IMP. This Drosophila persimilis (Fruit fly) protein is Adenylosuccinate synthetase.